The sequence spans 144 residues: Large ribosomal subunit protein uL16 (144 aa).

The protein belongs to the universal ribosomal protein uL16 family. In terms of assembly, part of the 50S ribosomal subunit.

Its function is as follows. Binds 23S rRNA and is also seen to make contacts with the A and possibly P site tRNAs. The protein is Large ribosomal subunit protein uL16 of Ligilactobacillus salivarius (strain UCC118) (Lactobacillus salivarius).